A 492-amino-acid chain; its full sequence is N-succinylglutamate 5-semialdehyde dehydrogenase (492 aa).

220–225 (GSANTG) is an NAD(+) binding site. Catalysis depends on residues glutamate 243 and cysteine 277.

It belongs to the aldehyde dehydrogenase family. AstD subfamily.

The enzyme catalyses N-succinyl-L-glutamate 5-semialdehyde + NAD(+) + H2O = N-succinyl-L-glutamate + NADH + 2 H(+). It participates in amino-acid degradation; L-arginine degradation via AST pathway; L-glutamate and succinate from L-arginine: step 4/5. Functionally, catalyzes the NAD-dependent reduction of succinylglutamate semialdehyde into succinylglutamate. This Escherichia coli O157:H7 protein is N-succinylglutamate 5-semialdehyde dehydrogenase.